The chain runs to 325 residues: UDP-N-acetylglucosamine transporter (325 aa).

Helical transmembrane passes span 8–24 (VSLG…VLTM), 42–58 (AVVV…ILLV), 138–154 (VYQW…VAFV), 173–189 (FVGL…SGFA), 209–225 (IQLG…GVYI), 246–262 (IVVV…AAVI), 268–284 (ILKG…STLI), and 295–311 (TSVF…ATFL).

This sequence belongs to the nucleotide-sugar transporter family. SLC35A subfamily. In terms of assembly, interacts with SLC35A2; the interaction is reduced in the presence of SLC35A4. Found in a complex with SLC35A2 and SLC35A4. Interacts with MGAT4B. In terms of processing, O-Glcnacylation regulates the stability of SLC35A3 and the specific complex formation with MGAT4B.

It localises to the golgi apparatus membrane. The catalysed reaction is UMP(out) + UDP-N-acetyl-alpha-D-glucosamine(in) = UMP(in) + UDP-N-acetyl-alpha-D-glucosamine(out). In terms of biological role, transports diphosphate-N-acetylglucosamine (UDP-GlcNAc) from the cytosol into the lumen of the Golgi apparatus, functioning as an antiporter that exchanges UDP-N-acetyl-alpha-D-glucosamine for UMP. May supply UDP-GlcNAc as substrate for Golgi-resident glycosyltransferases that generate highly branched, multiantennary complex N-glycans and keratan sulfate. However, the exact role of SLC35A3 still needs to be elucidated, it could be a member of a catalytically more efficient multiprotein complex rather than function independently as a single transporter. The sequence is that of UDP-N-acetylglucosamine transporter (SLC35A3) from Homo sapiens (Human).